Here is a 625-residue protein sequence, read N- to C-terminus: MKQPTEQRFDYVKIGLASPDRIRQWGERTLPNGILVGEVTKPETINYRTLKPEMDGLFCERIFGPSKDWECWCGKYKRVRHRGIVCERCGVEVTESRVRRHRMGFIKLAAPVTHVWYLKGIPSYLSILLDMPLRDVEQIVYFNAYVVLDPGNSGNLQYKQLLTEDQWLEIEEQIYAEDSELYGIEVGIGAEAIERLLQELNLDEEAEKLREEIIESKGQKRAKLIKRLRVIDNFIATGSQPDWMVLTVIPVIPPDLRPMVQLDGGRFATSDLNDLYRRVINRNNRLSRLQEILAPEIIVRNEKRMLQEAVDALIDNGRRGRTVVGANNRPLKSLSDIIEGKQGRFRQNLLGKRVDYSGRSVIVVGPKLKIFQCGLPREMAIELFQPFVIHRLIKLGLVNNIKAAKKMIQRGDPQVWNVLEEVITGHPVLLNRAPTLHRLGIQAFEPILVEGRAIQLHPLVCPAFNADFDGDQMAVHVPLSLESQSEARLLMLACHNILSPATGRPIVAPSQDMVLGCYYLTSENPKAQKGAESYYSDLEDALMAYEQGLVDLHAYVWVRCDLEVVTEQPDDKPIKTETSEDGTVTKYYRHRKVRETADGKLICQFIHTTVGRIIYNKTVQDTLVA.

Zn(2+) is bound by residues cysteine 71, cysteine 73, cysteine 86, and cysteine 89. Positions 467, 469, and 471 each coordinate Mg(2+).

Belongs to the RNA polymerase beta' chain family. RpoC1 subfamily. In terms of assembly, in cyanobacteria the RNAP catalytic core is composed of 2 alpha, 1 beta, 1 beta', 1 gamma and 1 omega subunit. When a sigma factor is associated with the core the holoenzyme is formed, which can initiate transcription. Mg(2+) serves as cofactor. Zn(2+) is required as a cofactor.

The enzyme catalyses RNA(n) + a ribonucleoside 5'-triphosphate = RNA(n+1) + diphosphate. In terms of biological role, DNA-dependent RNA polymerase catalyzes the transcription of DNA into RNA using the four ribonucleoside triphosphates as substrates. This Gloeothece citriformis (strain PCC 7424) (Cyanothece sp. (strain PCC 7424)) protein is DNA-directed RNA polymerase subunit gamma.